Consider the following 227-residue polypeptide: Putative ankyrin repeat protein RF_0314 (227 aa).

3 ANK repeats span residues 94–126 (NGCT…DPNI), 130–164 (DGNT…DIEL), and 168–199 (LGWT…DNDF).

This is Putative ankyrin repeat protein RF_0314 from Rickettsia felis (strain ATCC VR-1525 / URRWXCal2) (Rickettsia azadi).